The chain runs to 234 residues: Large ribosomal subunit protein uL1 (234 aa).

This sequence belongs to the universal ribosomal protein uL1 family. As to quaternary structure, part of the 50S ribosomal subunit.

In terms of biological role, binds directly to 23S rRNA. The L1 stalk is quite mobile in the ribosome, and is involved in E site tRNA release. Functionally, protein L1 is also a translational repressor protein, it controls the translation of the L11 operon by binding to its mRNA. The protein is Large ribosomal subunit protein uL1 of Erwinia tasmaniensis (strain DSM 17950 / CFBP 7177 / CIP 109463 / NCPPB 4357 / Et1/99).